A 67-amino-acid polypeptide reads, in one-letter code: Large ribosomal subunit protein bL35 (67 aa).

The protein belongs to the bacterial ribosomal protein bL35 family.

This Methylorubrum populi (strain ATCC BAA-705 / NCIMB 13946 / BJ001) (Methylobacterium populi) protein is Large ribosomal subunit protein bL35.